A 540-amino-acid polypeptide reads, in one-letter code: NADH-quinone oxidoreductase subunit N (540 aa).

14 helical membrane passes run 24-44 (LSPMLIVFGVAVAGVLVEAFL), 54-74 (LVLALGGLTAAFVAVVLLAGT), 88-108 (PTLFLQGTILLISIPAILIIA), 158-178 (APGHTEVFPLTLFAVGGMLLF), 184-204 (LLTMFVALEVLSLPLYLLCGL), 219-239 (YFLLGAFSSAFFLFGVALLYG), 263-283 (ALIGTALLSVGLLFKIGAVPF), 295-315 (PTPITAFMAAATKVAAVGAML), 331-351 (PVMWGVAILTMVVGAVMAVTQ), 357-377 (MLAYSSVAHAGFILTGLVAAN), 385-405 (MFYLLAYGFSTLGAFAVVTLV), 428-448 (VGGVFALFLLAFAGIPLTSGF), 462-482 (GAVPLVLVGVVSSAIAAFFYV), and 505-525 (MFTAAAIAVGVVVTVVLGILP).

The protein belongs to the complex I subunit 2 family. As to quaternary structure, NDH-1 is composed of 14 different subunits. Subunits NuoA, H, J, K, L, M, N constitute the membrane sector of the complex.

It localises to the cell membrane. It catalyses the reaction a quinone + NADH + 5 H(+)(in) = a quinol + NAD(+) + 4 H(+)(out). NDH-1 shuttles electrons from NADH, via FMN and iron-sulfur (Fe-S) centers, to quinones in the respiratory chain. The immediate electron acceptor for the enzyme in this species is believed to be a menaquinone. Couples the redox reaction to proton translocation (for every two electrons transferred, four hydrogen ions are translocated across the cytoplasmic membrane), and thus conserves the redox energy in a proton gradient. The sequence is that of NADH-quinone oxidoreductase subunit N from Rhodococcus opacus (strain B4).